Consider the following 506-residue polypeptide: ATP-dependent rRNA helicase RRP3 (506 aa).

2 disordered regions span residues 1 to 22 (MSGK…KSKE) and 37 to 88 (NQKK…FESF). A compositionally biased stretch (acidic residues) spans 49–69 (SDQEDDPSESEEEEGSDSEDV). Positions 86-114 (ESFSDLDLVPELIEACKNLNFAKPTPIQA) match the Q motif motif. Positions 117–289 (IPPALQGHDI…RASLTNPVKC (173 aa)) constitute a Helicase ATP-binding domain. Residue 130–137 (AQTGSGKT) participates in ATP binding. A DEAD box motif is present at residues 236–239 (DEAD). Residues 312–460 (LKNTYLIYLM…KENVNKDAIL (149 aa)) form the Helicase C-terminal domain. The tract at residues 485-506 (IARGKGRRGRMAARDDMDKGER) is disordered. Residues 496–506 (AARDDMDKGER) are compositionally biased toward basic and acidic residues.

Belongs to the DEAD box helicase family. DDX47/RRP3 subfamily. In terms of assembly, interacts with the SSU processome.

The protein localises to the nucleus. It carries out the reaction ATP + H2O = ADP + phosphate + H(+). In terms of biological role, ATP-dependent rRNA helicase required for pre-ribosomal RNA processing. Involved in the maturation of the 35S-pre-rRNA and to its cleavage to mature 18S rRNA. This Vanderwaltozyma polyspora (strain ATCC 22028 / DSM 70294 / BCRC 21397 / CBS 2163 / NBRC 10782 / NRRL Y-8283 / UCD 57-17) (Kluyveromyces polysporus) protein is ATP-dependent rRNA helicase RRP3.